The sequence spans 385 residues: Putative glutamate--cysteine ligase 2 (385 aa).

Belongs to the glutamate--cysteine ligase type 2 family. YbdK subfamily.

It catalyses the reaction L-cysteine + L-glutamate + ATP = gamma-L-glutamyl-L-cysteine + ADP + phosphate + H(+). In terms of biological role, ATP-dependent carboxylate-amine ligase which exhibits weak glutamate--cysteine ligase activity. The sequence is that of Putative glutamate--cysteine ligase 2 from Herpetosiphon aurantiacus (strain ATCC 23779 / DSM 785 / 114-95).